Consider the following 288-residue polypeptide: MLHYTRLGRNMGLGDAYVKKVFDSVATKYDMMNDVLSLGIHRIWKKHFVEDCVCPLPGSKFLDVAGGTGDIAFRITDSIRARGQSFGIVPKTLDGTKVVVCDINAMMLKEGQKRAEREGYMDIDWVCASGEELPFEDGAFDSYTVSFGIRNFSDRPKALREAFRVLKVGGALHVLEFSRVTCPLLSVPYELWSYGFMPQAGRMLADEESYRYLVDSIRAFPDQETFAQMIRDAGFGYVRYENLTGGIACIHTGVKTTPTPITPTTSSDIPAQNTSEATCEVKPEPNSA.

Threonine 68, aspartate 102, and serine 146 together coordinate S-adenosyl-L-methionine. Residues 260 to 270 (PITPTTSSDIP) are compositionally biased toward low complexity. The segment at 260–288 (PITPTTSSDIPAQNTSEATCEVKPEPNSA) is disordered. Over residues 279-288 (CEVKPEPNSA) the composition is skewed to basic and acidic residues.

The protein belongs to the class I-like SAM-binding methyltransferase superfamily. MenG/UbiE family. As to quaternary structure, component of a multi-subunit COQ enzyme complex.

It is found in the mitochondrion inner membrane. The catalysed reaction is a 2-methoxy-6-(all-trans-polyprenyl)benzene-1,4-diol + S-adenosyl-L-methionine = a 5-methoxy-2-methyl-3-(all-trans-polyprenyl)benzene-1,4-diol + S-adenosyl-L-homocysteine + H(+). It functions in the pathway cofactor biosynthesis; ubiquinone biosynthesis. Its function is as follows. Methyltransferase required for the conversion of 2-polyprenyl-6-methoxy-1,4-benzoquinol (DDMQH2) to 2-polyprenyl-3-methyl-6-methoxy-1,4-benzoquinol (DMQH2). The protein is 2-methoxy-6-polyprenyl-1,4-benzoquinol methylase, mitochondrial of Leishmania donovani.